Here is a 480-residue protein sequence, read N- to C-terminus: Ciliated left-right organizer protein containing ZP-N domains homolog (480 aa).

The N-terminal stretch at 1-23 is a signal peptide; the sequence is MKNQHNTFWVLCLLFVMFDETFS.

In terms of tissue distribution, expressed specifically by cells of the ciliated left-right organizer.

It is found in the secreted. The chain is Ciliated left-right organizer protein containing ZP-N domains homolog from Xenopus tropicalis (Western clawed frog).